The sequence spans 464 residues: Ribosomal protein uS12 methylthiotransferase RimO (464 aa).

The region spanning 14–125 (PTVAFAHLGC…IVEVLQRVEA (112 aa)) is the MTTase N-terminal domain. Residues cysteine 23, cysteine 59, cysteine 88, cysteine 163, cysteine 167, and cysteine 170 each coordinate [4Fe-4S] cluster. A Radical SAM core domain is found at 149–378 (TTDQAVAFLK…MALQQPISAE (230 aa)). The 72-residue stretch at 381–452 (HSWVSRTVDV…VYDLSGRIVG (72 aa)) folds into the TRAM domain.

This sequence belongs to the methylthiotransferase family. RimO subfamily. The cofactor is [4Fe-4S] cluster.

It localises to the cytoplasm. It carries out the reaction L-aspartate(89)-[ribosomal protein uS12]-hydrogen + (sulfur carrier)-SH + AH2 + 2 S-adenosyl-L-methionine = 3-methylsulfanyl-L-aspartate(89)-[ribosomal protein uS12]-hydrogen + (sulfur carrier)-H + 5'-deoxyadenosine + L-methionine + A + S-adenosyl-L-homocysteine + 2 H(+). In terms of biological role, catalyzes the methylthiolation of an aspartic acid residue of ribosomal protein uS12. The sequence is that of Ribosomal protein uS12 methylthiotransferase RimO from Parasynechococcus marenigrum (strain WH8102).